The primary structure comprises 82 residues: ATP synthase subunit c (82 aa).

The next 2 membrane-spanning stretches (helical) occupy residues 7 to 27 (LVALACGIIIGLGAIGACIGI) and 53 to 73 (FLLAGLIDAAFLIGVGIAMLF).

Belongs to the ATPase C chain family. F-type ATPases have 2 components, F(1) - the catalytic core - and F(0) - the membrane proton channel. F(1) has five subunits: alpha(3), beta(3), gamma(1), delta(1), epsilon(1). F(0) has three main subunits: a(1), b(2) and c(10-14). The alpha and beta chains form an alternating ring which encloses part of the gamma chain. F(1) is attached to F(0) by a central stalk formed by the gamma and epsilon chains, while a peripheral stalk is formed by the delta and b chains.

Its subcellular location is the cell inner membrane. Its function is as follows. F(1)F(0) ATP synthase produces ATP from ADP in the presence of a proton or sodium gradient. F-type ATPases consist of two structural domains, F(1) containing the extramembraneous catalytic core and F(0) containing the membrane proton channel, linked together by a central stalk and a peripheral stalk. During catalysis, ATP synthesis in the catalytic domain of F(1) is coupled via a rotary mechanism of the central stalk subunits to proton translocation. Functionally, key component of the F(0) channel; it plays a direct role in translocation across the membrane. A homomeric c-ring of between 10-14 subunits forms the central stalk rotor element with the F(1) delta and epsilon subunits. This chain is ATP synthase subunit c, found in Leptothrix cholodnii (strain ATCC 51168 / LMG 8142 / SP-6) (Leptothrix discophora (strain SP-6)).